The chain runs to 413 residues: Eukaryotic initiation factor 4A-10 (413 aa).

A Q motif motif is present at residues 40 to 68; the sequence is DSFDAMGLQENLLRGIYAYGFEKPSAIQQ. The 171-residue stretch at 71–241 folds into the Helicase ATP-binding domain; the sequence is IVPFCKGLDV…RKFMNKPVRI (171 aa). Residue 84–91 participates in ATP binding; that stretch reads AQSGTGKT. The DEAD box signature appears at 189–192; that stretch reads DEAD. Positions 252 to 413 constitute a Helicase C-terminal domain; sequence GIKQFYVNVD…ELPANVADLL (162 aa).

This sequence belongs to the DEAD box helicase family. eIF4A subfamily. EIF4F is a multi-subunit complex, the composition of which varies with external and internal environmental conditions. It is composed of at least EIF4A, EIF4E and EIF4G.

It carries out the reaction ATP + H2O = ADP + phosphate + H(+). In terms of biological role, ATP-dependent RNA helicase which is a subunit of the eIF4F complex involved in cap recognition and is required for mRNA binding to ribosome. In the current model of translation initiation, eIF4A unwinds RNA secondary structures in the 5'-UTR of mRNAs which is necessary to allow efficient binding of the small ribosomal subunit, and subsequent scanning for the initiator codon. This is Eukaryotic initiation factor 4A-10 from Nicotiana tabacum (Common tobacco).